Here is a 196-residue protein sequence, read N- to C-terminus: Ribosome maturation factor RimP (196 aa).

Residues 163–196 are disordered; sequence GLAPSKPTGPAPKRPKPKTNSSSNEPAAKKPRAE.

This sequence belongs to the RimP family.

It localises to the cytoplasm. Its function is as follows. Required for maturation of 30S ribosomal subunits. The chain is Ribosome maturation factor RimP from Stenotrophomonas maltophilia (strain R551-3).